Reading from the N-terminus, the 418-residue chain is Cyclin-dependent kinase 15 (418 aa).

Residues tyrosine 84–phenylalanine 369 enclose the Protein kinase domain. ATP is bound by residues leucine 90–valine 98 and lysine 113. The Proton acceptor role is filled by aspartate 205.

This sequence belongs to the protein kinase superfamily. CMGC Ser/Thr protein kinase family. CDC2/CDKX subfamily. Mg(2+) serves as cofactor.

The enzyme catalyses L-seryl-[protein] + ATP = O-phospho-L-seryl-[protein] + ADP + H(+). It carries out the reaction L-threonyl-[protein] + ATP = O-phospho-L-threonyl-[protein] + ADP + H(+). Functionally, serine/threonine-protein kinase involved in the control of the eukaryotic cell cycle, whose activity is controlled by an associated cyclin. This chain is Cyclin-dependent kinase 15 (cdk15), found in Danio rerio (Zebrafish).